The chain runs to 422 residues: Immunoglobulin mu Fc receptor (422 aa).

Positions 1–16 (MDFWLWLLYFLPVSGA) are cleaved as a signal peptide. Over 18 to 262 (RVLPEVQLNV…DRGLHIPIPE (245 aa)) the chain is Extracellular. In terms of domain architecture, Ig-like spans 24–121 (QLNVEWGGSI…GKTQKITLNV (98 aa)). 2 cysteine pairs are disulfide-bonded: cysteine 37-cysteine 103 and cysteine 49-cysteine 58. At threonine 91 the chain carries Phosphothreonine. The helical transmembrane segment at 263 to 283 (FHILIPTFLGFLLLVLLGLVV) threads the bilayer. At 284-422 (KRAIQRRRAS…YAPGPRSSCP (139 aa)) the chain is on the cytoplasmic side. Residues 290–308 (RRASSRRAGRLAMRRRGRG) are compositionally biased toward basic residues. Disordered stretches follow at residues 290–367 (RRAS…QVLE) and 391–422 (VNLEDPDSDDYINIPDPSHLPSYAPGPRSSCP). Residues 344–363 (LGPAEAPLLNAPASASPASP) are compositionally biased toward low complexity.

As to quaternary structure, interacts (via Ig-like domain) with IGHM (via CH4/Cmu4 domain), both secreted and membrane-bound IgM; the interaction is glycan-independent and multivalent theoretically involving up to eight binding sites for the IgM pentamer. Phosphorylated on both Tyr and Ser residues. Post-translationally, O-glycosylated. Sialylated. O-linked glycans regulate trafficking to the plasma membrane. Expressed in pre-B cells, immature and mature B cells residing in primary and secondary lymphoid organs (at protein level). In the spleen, highly expressed in follicular and marginal zone B cells and at lower levels in germinal center B cells and plasma cells. Expressed in splenic dendritic cells and in granulocytes. In the peritoneum, expressed in B1-a and B-2 cell lineages. In the bone marrow, expressed in immature B cells and at a lower level in pro- and pre-B cells (at protein level). Expressed in M cells (at protein level).

It localises to the cell membrane. Its subcellular location is the early endosome membrane. It is found in the golgi apparatus. The protein resides in the trans-Golgi network membrane. The protein localises to the lysosome membrane. In terms of biological role, high-affinity Fc receptor for immunoglobulin M (IgM), both secreted and membrane-bound IgM. Primarily regulates IgM transport and homeostasis. In lymphoid cells, enables exocytosis of membrane-bound IgM on the plasma membrane as well as endocytosis of IgM-antigen complexes toward lysosomes for degradation. In mucosal epithelium, mediates retrotranscytosis of antigen-IgM complexes across mucosal M cells toward antigen-presenting cells in mucosal lymphoid tissues. Triggers costimulatory signaling and mediates most of IgM effector functions involved in B cell development and primary immune response to infection. Likely limits tonic IgM BCR signaling to self-antigens for proper negative selection of autoreactive B cells in the bone marrow and for the maintenance of regulatory B cell pool in peripheral lymphoid organs. Mediates antibody responses to T cell-dependent and T cell-independent antigens and promotes induction of an efficient neutralizing IgG response. Engages in cross-talk with antigen-receptor signaling via the non-canonical NF-kappa-B, MAP kinases and calcium signaling pathways. The polypeptide is Immunoglobulin mu Fc receptor (Mus musculus (Mouse)).